A 347-amino-acid polypeptide reads, in one-letter code: NADH-ubiquinone oxidoreductase chain 2 (347 aa).

Transmembrane regions (helical) follow at residues 3–23 (PMTF…VMMS), 59–79 (YFLT…INLL), 89–109 (LINP…LGLA), 150–170 (NLNI…WGGL), 178–198 (IMAY…MYNP), 201–221 (MLLN…LLMI), 237–257 (LPLI…LPPL), 276–296 (IILS…YTRI), and 326–346 (LPLM…TAIL).

This sequence belongs to the complex I subunit 2 family. In terms of assembly, core subunit of respiratory chain NADH dehydrogenase (Complex I) which is composed of 45 different subunits. Interacts with TMEM242.

The protein resides in the mitochondrion inner membrane. The catalysed reaction is a ubiquinone + NADH + 5 H(+)(in) = a ubiquinol + NAD(+) + 4 H(+)(out). Its function is as follows. Core subunit of the mitochondrial membrane respiratory chain NADH dehydrogenase (Complex I) which catalyzes electron transfer from NADH through the respiratory chain, using ubiquinone as an electron acceptor. Essential for the catalytic activity and assembly of complex I. This Nyctophilus arnhemensis (Northern long-eared bat) protein is NADH-ubiquinone oxidoreductase chain 2.